Here is a 436-residue protein sequence, read N- to C-terminus: Trigger factor (436 aa).

The PPIase FKBP-type domain maps to 161-246; it reads DDQLNIDFVG…VNSVAEPKLP (86 aa).

Belongs to the FKBP-type PPIase family. Tig subfamily.

It localises to the cytoplasm. It carries out the reaction [protein]-peptidylproline (omega=180) = [protein]-peptidylproline (omega=0). Its function is as follows. Involved in protein export. Acts as a chaperone by maintaining the newly synthesized protein in an open conformation. Functions as a peptidyl-prolyl cis-trans isomerase. The protein is Trigger factor of Pseudomonas aeruginosa (strain LESB58).